Here is a 605-residue protein sequence, read N- to C-terminus: Isocitrate dehydrogenase kinase/phosphatase (605 aa).

ATP-binding positions include 353-359 (APGFKGT) and Lys-374. Residue Asp-413 is part of the active site.

Belongs to the AceK family.

Its subcellular location is the cytoplasm. The enzyme catalyses L-seryl-[isocitrate dehydrogenase] + ATP = O-phospho-L-seryl-[isocitrate dehydrogenase] + ADP + H(+). Functionally, bifunctional enzyme which can phosphorylate or dephosphorylate isocitrate dehydrogenase (IDH) on a specific serine residue. This is a regulatory mechanism which enables bacteria to bypass the Krebs cycle via the glyoxylate shunt in response to the source of carbon. When bacteria are grown on glucose, IDH is fully active and unphosphorylated, but when grown on acetate or ethanol, the activity of IDH declines drastically concomitant with its phosphorylation. The polypeptide is Isocitrate dehydrogenase kinase/phosphatase (Rhodopseudomonas palustris (strain HaA2)).